The sequence spans 349 residues: Nicotinate-nucleotide--dimethylbenzimidazole phosphoribosyltransferase (349 aa).

Residue E318 is the Proton acceptor of the active site.

This sequence belongs to the CobT family.

The enzyme catalyses 5,6-dimethylbenzimidazole + nicotinate beta-D-ribonucleotide = alpha-ribazole 5'-phosphate + nicotinate + H(+). Its pathway is nucleoside biosynthesis; alpha-ribazole biosynthesis; alpha-ribazole from 5,6-dimethylbenzimidazole: step 1/2. In terms of biological role, catalyzes the synthesis of alpha-ribazole-5'-phosphate from nicotinate mononucleotide (NAMN) and 5,6-dimethylbenzimidazole (DMB). This chain is Nicotinate-nucleotide--dimethylbenzimidazole phosphoribosyltransferase, found in Alkaliphilus metalliredigens (strain QYMF).